Here is a 212-residue protein sequence, read N- to C-terminus: TATA-box-binding protein 2 (212 aa).

2 consecutive repeat copies span residues 30–114 (THPE…KKIG) and 120–201 (SNFN…YPIL).

Belongs to the TBP family. In terms of assembly, belongs to the TFIID complex together with the TBP-associated factors (TAFs). Binds DNA as monomer.

The protein resides in the nucleus. In terms of biological role, general transcription factor that functions at the core of the DNA-binding multiprotein factor TFIID. Binding of TFIID to the TATA box is the initial transcriptional step of the pre-initiation complex (PIC), playing a role in the activation of eukaryotic genes transcribed by RNA polymerase II. The polypeptide is TATA-box-binding protein 2 (Entamoeba histolytica (strain ATCC 30459 / HM-1:IMSS / ABRM)).